The chain runs to 385 residues: Putative transport protein BpOF4_00890 (385 aa).

8 consecutive transmembrane segments (helical) span residues 42-62 (TIWI…ILPV), 63-83 (SLPL…VNAL), 93-113 (VAVM…GYYI), 191-211 (SIPG…LFML), 255-275 (IIIF…VALL), 276-296 (MAFI…VILA), 304-324 (IVGD…LLII), and 350-370 (LGLM…VIAF).

The protein belongs to the autoinducer-2 exporter (AI-2E) (TC 2.A.86) family.

The protein localises to the cell membrane. In Alkalihalophilus pseudofirmus (strain ATCC BAA-2126 / JCM 17055 / OF4) (Bacillus pseudofirmus), this protein is Putative transport protein BpOF4_00890.